The following is a 398-amino-acid chain: Organelle RRM domain-containing protein 1, chloroplastic (398 aa).

The transit peptide at 1–88 (MDTALPSVLI…RWVVVMDTPP (88 aa)) directs the protein to the chloroplast. The segment covering 54–70 (LLASSSESPPAQLAAAS) has biased composition (low complexity). A disordered region spans residues 54–79 (LLASSSESPPAQLAAASTESQSRSSR). One can recognise an RRM domain in the interval 299-377 (KRLFVTGLSF…WMIVVDVAKT (79 aa)).

It is found in the plastid. Its subcellular location is the chloroplast. In terms of biological role, involved in C-to-U editing of chloroplastic RNA. Functions as major chloroplastic editing factor. Controls a majority of the chloroplastic editing sites. The chain is Organelle RRM domain-containing protein 1, chloroplastic (ORRM1) from Zea mays (Maize).